Here is a 239-residue protein sequence, read N- to C-terminus: MAEDATSSHPSRYVKLTKDQDAPAEDIRPGELNQPVHVPQLEGRRCSECGQVLPESYEPPADEPWTTGIFGCTDDPETCRTGLFCPCVLFGRNVEAVREDIPWTTPCVCHAVFVEGGITLAILTAIFHGVDPRTSFLIGEGLVFSWWLCATYTGIFRQGLQRKYHLKNSPCDPCMVHCCLHWCANCQEHRERTGRLAENNAVPMTVVNPPPVQEMSMLEEVEEKGAEKSEHDDVEVIPL.

Residues 1–10 (MAEDATSSHP) are compositionally biased toward polar residues. Residues 1-33 (MAEDATSSHPSRYVKLTKDQDAPAEDIRPGELN) are disordered. Positions 16 to 29 (LTKDQDAPAEDIRP) are enriched in basic and acidic residues. 2 helical membrane passes run 107 to 127 (CVCH…TAIF) and 136 to 156 (FLIG…TGIF).

The protein belongs to the cornifelin family. As to expression, expressed in roots, leaves, stalks, apical meristems, immature ears, endosperm, pericarp and tassel spikelets.

It localises to the membrane. In Zea mays (Maize), this protein is Cell number regulator 6 (CNR6).